The primary structure comprises 223 residues: Adenylate kinase (223 aa).

10–15 contacts ATP; sequence GSGKGT. The interval 30-59 is NMP; the sequence is ESGAIFREHIGGGTELGKKAKAYIDRGDLV. AMP-binding positions include S31, R36, 57–59, 84–87, and Q91; these read DLV and GFPR. An LID region spans residues 125–164; it reads GRRLCKNNNNHPNNIFIEAIKPNGDVCRVCGGTLSSRSDD. ATP is bound at residue R126. Positions 161 and 173 each coordinate AMP. ATP is bound at residue G209.

It belongs to the adenylate kinase family. As to quaternary structure, monomer.

The protein localises to the cytoplasm. It catalyses the reaction AMP + ATP = 2 ADP. It functions in the pathway purine metabolism; AMP biosynthesis via salvage pathway; AMP from ADP: step 1/1. Catalyzes the reversible transfer of the terminal phosphate group between ATP and AMP. Plays an important role in cellular energy homeostasis and in adenine nucleotide metabolism. The polypeptide is Adenylate kinase (Desulfovibrio desulfuricans (strain ATCC 27774 / DSM 6949 / MB)).